The following is a 306-amino-acid chain: Ribosomal protein L11 methyltransferase (306 aa).

S-adenosyl-L-methionine-binding residues include Thr154, Gly179, Asp201, and Asn242.

This sequence belongs to the methyltransferase superfamily. PrmA family.

It localises to the cytoplasm. The catalysed reaction is L-lysyl-[protein] + 3 S-adenosyl-L-methionine = N(6),N(6),N(6)-trimethyl-L-lysyl-[protein] + 3 S-adenosyl-L-homocysteine + 3 H(+). In terms of biological role, methylates ribosomal protein L11. This Xanthomonas euvesicatoria pv. vesicatoria (strain 85-10) (Xanthomonas campestris pv. vesicatoria) protein is Ribosomal protein L11 methyltransferase.